The primary structure comprises 512 residues: Cytochrome P450 monooxygenase poxM (512 aa).

The helical transmembrane segment at 15 to 35 (LLKGATIALSFFSLYLFGLVI) threads the bilayer. Position 449 (Cys-449) interacts with heme.

The protein belongs to the cytochrome P450 family. Heme serves as cofactor.

The protein resides in the membrane. Its pathway is secondary metabolite biosynthesis. Functionally, cytochrome P450 monooxygenase; part of the gene cluster that mediates the biosynthesis of oxaleimides, cytotoxic compounds containing an unusual disubstituted succinimide moiety. The first step of the pathway is provided by the HR-PKS poxF that serves in a new mode of collaborative biosynthesis with the PKS-NRPS poxE, by providing the olefin containing amino acid substrate via the synthesis of an ACP-bound dec-4-enoate. The cytochrome P450 monooxygenase poxM-catalyzed oxidation at the alpha-position creates the enzyme-bound 2-hydroxydec-4-enoyl-ACP thioester, which may be prone to spontaneous hydrolysis to yield 2-hydroxydec-4-enoic acid due to increased electrophilicity of the carbonyl. 2-hydroxydec-4-enoic acid can then be further oxidized by poxM to yield the alpha-ketoacid 2-oxodec-4-enoicacid, which is reductively aminated by the aminotransferase poxL to yield (S,E)-2-aminodec-4-enoic acid. The Hybrid PKS-NRPS synthetase poxE then performs condensation between the octaketide product of its PKS modules and the amino group of (S,E)-2-aminodec-4-enoic acid which is activated and incorporated by the adenylation domain. The resulting aminoacyl product can be cyclized by the Diels-Alderase PoxQ and reductively released by the reductive (R) domain of poxE to yield an aldehyde intermediate. The released aldehyde is then substrate for a Knoevenagel condensation by the hydrolyase poxO followed by an oxidation at the 5-position of the pyrrolidone ring. The presence of the olefin from the amino acid building block allows for migration of the substituted allyl group to occur. This allylic transposition reaction takes place in a conjugate addition, semipinacol-like fashion to yield a succinimide intermediate. Iterative two-electron oxidations of the C7 methyl of the succinimide intermediate to the carboxylic acid can be catalyzed by one of two remaining cytochrome P450 monooxygenasess poxC or poxD to yield oxaleimide A. Subsequent oxidation yields the maleimide scaffold oxaleimide I. Both oxaleimide A and oxaleimide I can undergo oxidative modifications in the decalin ring to yield the series of products oxaleimides B to H. In Penicillium oxalicum (strain 114-2 / CGMCC 5302) (Penicillium decumbens), this protein is Cytochrome P450 monooxygenase poxM.